Consider the following 158-residue polypeptide: Protein Smg homolog (158 aa).

This sequence belongs to the Smg family.

The protein is Protein Smg homolog of Coxiella burnetii (strain RSA 331 / Henzerling II).